The primary structure comprises 1040 residues: Multidrug resistance protein MdtB (1040 aa).

The next 12 membrane-spanning stretches (helical) occupy residues 25–45 (LLMA…PVAA), 347–367 (LMLA…NIPA), 369–389 (IIPG…MVFL), 396–416 (LTLM…IVVI), 440–460 (IGFT…PLLF), 472–492 (FAVT…TLTP), 537–557 (WLTL…WIVI), 863–883 (LGST…VLGV), 888–908 (FIHP…ALLA), 910–930 (IIAG…LIGI), 968–988 (ILMT…STGV), and 998–1018 (IAMV…TPVI).

It belongs to the resistance-nodulation-cell division (RND) (TC 2.A.6) family. MdtB subfamily. In terms of assembly, part of a tripartite efflux system composed of MdtA, MdtB and MdtC. MdtB forms a heteromultimer with MdtC.

The protein resides in the cell inner membrane. The polypeptide is Multidrug resistance protein MdtB (Salmonella gallinarum (strain 287/91 / NCTC 13346)).